The primary structure comprises 397 residues: Elongation factor Tu-1 (397 aa).

The tr-type G domain maps to 10–206; the sequence is KPHVNIGTIG…AVDEAIPEPE (197 aa). Residues 19 to 26 are G1; the sequence is GHIDHGKT. Position 19 to 26 (19 to 26) interacts with GTP; it reads GHIDHGKT. Threonine 26 lines the Mg(2+) pocket. The segment at 62 to 66 is G2; sequence GITIS. The tract at residues 83-86 is G3; sequence DCPG. GTP is bound by residues 83-87 and 138-141; these read DCPGH and NKAD. Residues 138 to 141 form a G4 region; that stretch reads NKAD. The G5 stretch occupies residues 176–178; sequence SAL.

It belongs to the TRAFAC class translation factor GTPase superfamily. Classic translation factor GTPase family. EF-Tu/EF-1A subfamily. As to quaternary structure, monomer.

It localises to the cytoplasm. The catalysed reaction is GTP + H2O = GDP + phosphate + H(+). In terms of biological role, GTP hydrolase that promotes the GTP-dependent binding of aminoacyl-tRNA to the A-site of ribosomes during protein biosynthesis. The sequence is that of Elongation factor Tu-1 from Streptomyces coelicolor (strain ATCC BAA-471 / A3(2) / M145).